We begin with the raw amino-acid sequence, 220 residues long: Large ribosomal subunit protein uL3 (220 aa).

The segment at 126–158 (GFQGAIKRHGQSRGPMSHGSRYHRRPGSMGMAS) is disordered.

This sequence belongs to the universal ribosomal protein uL3 family. In terms of assembly, part of the 50S ribosomal subunit. Forms a cluster with proteins L14 and L19.

One of the primary rRNA binding proteins, it binds directly near the 3'-end of the 23S rRNA, where it nucleates assembly of the 50S subunit. This is Large ribosomal subunit protein uL3 from Macrococcus caseolyticus (strain JCSC5402) (Macrococcoides caseolyticum).